The sequence spans 310 residues: tRNA-cytidine(32) 2-sulfurtransferase (310 aa).

The PP-loop motif signature appears at 48 to 53; that stretch reads SGGKDS. [4Fe-4S] cluster-binding residues include Cys123, Cys126, and Cys214.

Belongs to the TtcA family. As to quaternary structure, homodimer. Mg(2+) serves as cofactor. Requires [4Fe-4S] cluster as cofactor.

Its subcellular location is the cytoplasm. It catalyses the reaction cytidine(32) in tRNA + S-sulfanyl-L-cysteinyl-[cysteine desulfurase] + AH2 + ATP = 2-thiocytidine(32) in tRNA + L-cysteinyl-[cysteine desulfurase] + A + AMP + diphosphate + H(+). It participates in tRNA modification. In terms of biological role, catalyzes the ATP-dependent 2-thiolation of cytidine in position 32 of tRNA, to form 2-thiocytidine (s(2)C32). The sulfur atoms are provided by the cysteine/cysteine desulfurase (IscS) system. This is tRNA-cytidine(32) 2-sulfurtransferase from Vibrio vulnificus (strain YJ016).